A 497-amino-acid chain; its full sequence is Tryptophan decarboxylase 2 (497 aa).

Residues alanine 162, serine 163, threonine 257, and asparagine 311 each contribute to the pyridoxal 5'-phosphate site. An N6-(pyridoxal phosphate)lysine modification is found at lysine 314.

Belongs to the group II decarboxylase family. Pyridoxal 5'-phosphate serves as cofactor.

It catalyses the reaction L-tryptophan + H(+) = tryptamine + CO2. Its function is as follows. Involved in serotonin biosynthesis. Catalyzes the decarboxylation of L-tryptophan to tryptamine, which is converted to serotonin by tryptamine 5-hydroxylase. May play a minor role in serotonin biosynthetis during senescence. Accumulation of serotonin attenuates leaf senescence. The chain is Tryptophan decarboxylase 2 from Oryza sativa subsp. japonica (Rice).